Reading from the N-terminus, the 295-residue chain is Nucleotide-binding protein BLi03725/BL03417 (295 aa).

16-23 contacts ATP; that stretch reads GMSGAGKT. 67–70 is a GTP binding site; the sequence is DLRG.

Belongs to the RapZ-like family.

In terms of biological role, displays ATPase and GTPase activities. The polypeptide is Nucleotide-binding protein BLi03725/BL03417 (Bacillus licheniformis (strain ATCC 14580 / DSM 13 / JCM 2505 / CCUG 7422 / NBRC 12200 / NCIMB 9375 / NCTC 10341 / NRRL NRS-1264 / Gibson 46)).